Consider the following 64-residue polypeptide: Large ribosomal subunit protein uL29 (64 aa).

Belongs to the universal ribosomal protein uL29 family.

In Legionella pneumophila (strain Lens), this protein is Large ribosomal subunit protein uL29.